The sequence spans 195 residues: dITP/XTP pyrophosphatase (195 aa).

8-13 (SNNQGK) contacts substrate. Mg(2+) contacts are provided by E39 and D68. D68 (proton acceptor) is an active-site residue. Residues S69, 149–152 (FGYD), K172, and 177–178 (HR) contribute to the substrate site.

Belongs to the HAM1 NTPase family. Homodimer. Mg(2+) serves as cofactor.

It carries out the reaction XTP + H2O = XMP + diphosphate + H(+). The catalysed reaction is dITP + H2O = dIMP + diphosphate + H(+). The enzyme catalyses ITP + H2O = IMP + diphosphate + H(+). Pyrophosphatase that catalyzes the hydrolysis of nucleoside triphosphates to their monophosphate derivatives, with a high preference for the non-canonical purine nucleotides XTP (xanthosine triphosphate), dITP (deoxyinosine triphosphate) and ITP. Seems to function as a house-cleaning enzyme that removes non-canonical purine nucleotides from the nucleotide pool, thus preventing their incorporation into DNA/RNA and avoiding chromosomal lesions. The polypeptide is dITP/XTP pyrophosphatase (Staphylococcus aureus (strain Mu50 / ATCC 700699)).